We begin with the raw amino-acid sequence, 110 residues long: Small ribosomal subunit protein bS6 (110 aa).

Belongs to the bacterial ribosomal protein bS6 family.

Binds together with bS18 to 16S ribosomal RNA. The chain is Small ribosomal subunit protein bS6 (rpsF) from Aquifex aeolicus (strain VF5).